We begin with the raw amino-acid sequence, 296 residues long: MTDIHIQDGDLSSLKDKVVVITGGSSGIGLATTNLLLDLGAKVVIGDLQPPTTRVDSERCSFHKVDVTVWSDQLTLFKEARELHGRIDHVFANAGVGPKADYLSTALDQNGDLVEPTFLTLDVNLKAVIYTATIACYYMREEQQSPAGGSIVIVSSVAGVSRFRAVDYATAKHGNLGFARGLHQRLTAENSPTRVNLIAPSWTNTGFMPPQIMAAVGVEPQEPASVGRAAAYLMADDSRKGQMIHIAKGRYREVEESIMLPAAEKVVDVENGGVMEDDTLAKIIETMGIFKAKATQ.

I28, D66, and N93 together coordinate NADP(+). Catalysis depends on S155, which acts as the Proton donor. The NADP(+) site is built by Y168, K172, and T205. Residue Y168 is the Proton acceptor of the active site. The active-site Lowers pKa of active site Tyr is K172.

The protein belongs to the short-chain dehydrogenases/reductases (SDR) family.

It catalyses the reaction ascofuranol + A = ascofuranone + AH2. It functions in the pathway secondary metabolite biosynthesis; terpenoid biosynthesis. Functionally, short-chain dehydrogenase/reductase; part of the asc-2 gene cluster that mediates the biosynthesis of ascofuranone, a strong inhibitor of cyanide-insensitive alternative oxidases and a promising drug candidate against African trypanosomiasis. The first step in the pathway is performed by the non-reducing polyketide synthase ascC that produces orsellinic acid by condensing acetyl-CoA with 3 malonyl-CoA units. Orsellinic acid is then prenylated by the prenyltransferase ascA to yield ilicicolinic acid B. Ilicicolinic acid B is further reduced to ilicicolin B by the reductase ascB. The halogenase ascD then chlorinates ilicicolin B to produce ilicicolin A which is converted to ilicicolin A epoxide by the cytochrome P450 monooxygenase ascE that catalyzes stereoselective epoxidation of the terminal double bond of the prenyl group. Ilicicolin A epoxide is the last common precursor for the biosynthesis of ascofuranone and ascochlorin. The terpene cyclase ascF produces a monocyclic terpene, and the cyclization reaction is proposed to be initiated by protonation of the terminal epoxide of ilicicolin A epoxide to generate a monocyclic tertiarycation, which is followed by a series of hydride and methyl shifts with abstraction of proton, leading to the formation of the (14S,15R,19R)-trimethylcyclohexanone ring structure of ilicicolin C, which is finally reduced to ascochlorin by the dehydrogenase ascG. On the other hand, ilicicolin A epoxide is hydroxylated by the cytochrome P450 monooxygenase ascH, and the resultant product is cyclized by the terpene cyclase ascI to ascofuranol via protonation-initiated epoxide ring opening, which facilitates the 6-endo-tet cyclization to form the tetrahy-drofuran ring. Finally, ascofuranol is oxidized into ascofuranone by ascJ. This is Short-chain dehydrogenase/reductase ascJ from Acremonium egyptiacum (Oospora egyptiaca).